The following is a 403-amino-acid chain: Leu/Ile/Val-binding protein homolog 8 (403 aa).

The signal sequence occupies residues 1–26 (MRLSRLLIGASLGVALSSTAFTAALA).

It belongs to the leucine-binding protein family.

Functionally, component of an amino-acid transport system. This Brucella suis biovar 1 (strain 1330) protein is Leu/Ile/Val-binding protein homolog 8.